A 218-amino-acid polypeptide reads, in one-letter code: Octanoyltransferase (218 aa).

Residues 32 to 211 enclose the BPL/LPL catalytic domain; sequence INTYDEIWFL…KLSQLLNVSI (180 aa). Substrate is bound by residues 75-82, 142-144, and 155-157; these read RGGQITYH, SLG, and GLS. Catalysis depends on Cys173, which acts as the Acyl-thioester intermediate.

This sequence belongs to the LipB family.

It is found in the cytoplasm. It carries out the reaction octanoyl-[ACP] + L-lysyl-[protein] = N(6)-octanoyl-L-lysyl-[protein] + holo-[ACP] + H(+). The protein operates within protein modification; protein lipoylation via endogenous pathway; protein N(6)-(lipoyl)lysine from octanoyl-[acyl-carrier-protein]: step 1/2. Functionally, catalyzes the transfer of endogenously produced octanoic acid from octanoyl-acyl-carrier-protein onto the lipoyl domains of lipoate-dependent enzymes. Lipoyl-ACP can also act as a substrate although octanoyl-ACP is likely to be the physiological substrate. The sequence is that of Octanoyltransferase from Buchnera aphidicola subsp. Schizaphis graminum (strain Sg).